Consider the following 240-residue polypeptide: Small ribosomal subunit protein eS4 (240 aa).

An S4 RNA-binding domain is found at 37–99 (VPLVVLLRDV…RGEFFRVFPD (63 aa)).

It belongs to the eukaryotic ribosomal protein eS4 family.

The protein is Small ribosomal subunit protein eS4 of Halorubrum lacusprofundi (strain ATCC 49239 / DSM 5036 / JCM 8891 / ACAM 34).